The sequence spans 355 residues: Peptide chain release factor 1 (355 aa).

Position 231 is an N5-methylglutamine (Gln231).

The protein belongs to the prokaryotic/mitochondrial release factor family. Post-translationally, methylated by PrmC. Methylation increases the termination efficiency of RF1.

It localises to the cytoplasm. Peptide chain release factor 1 directs the termination of translation in response to the peptide chain termination codons UAG and UAA. The polypeptide is Peptide chain release factor 1 (Wolinella succinogenes (strain ATCC 29543 / DSM 1740 / CCUG 13145 / JCM 31913 / LMG 7466 / NCTC 11488 / FDC 602W) (Vibrio succinogenes)).